Consider the following 423-residue polypeptide: Hydroxymethylglutaryl-CoA synthase-like protein AKT4-1 (423 aa).

This sequence belongs to the thiolase-like superfamily. HMG-CoA synthase family.

It participates in mycotoxin biosynthesis. Hydroxymethylglutaryl-CoA synthase-like protein; part of the gene clusters that mediate the biosynthesis of the host-selective toxins (HSTs) AK-toxins responsible for Japanese pear black spot disease by the Japanese pear pathotype. AK-toxins are esters of 9,10-epoxy 8-hydroxy 9-methyldecatrienoic acid (EDA). On cellular level, AK-toxins affect plasma membrane of susceptible cells and cause a sudden increase in loss of K(+) after a few minutes of toxin treatment. The acyl-CoA ligase AKT1, the hydrolase AKT2 and enoyl-CoA hydratase AKT3 are all involved in the biosynthesis of the AK-, AF- and ACT-toxin common 9,10-epoxy-8-hydroxy-9-methyl-decatrienoic acid (EDA) structural moiety. Part of the EDA biosynthesis occurs in the peroxisome since these 3 enzymes are localized in peroxisomes. The exact roles of the 3 enzymes, as well as of additional AK-toxin clusters enzymes, including AKT4, AKT6 and AKTS1, have still to be elucidated. The Cytochrome P450 monooxygenase AKT7 on the other side functions to limit production of EDA and AK-toxin, probably via the catalysis of a side reaction of EDA or its precursor. The protein is Hydroxymethylglutaryl-CoA synthase-like protein AKT4-1 of Alternaria alternata (Alternaria rot fungus).